We begin with the raw amino-acid sequence, 1133 residues long: MVKLSIVLTPQFLSHDQGQLTKELQQHVKSVTCPCEYLRKVINTLADHHHRGTDFGGSPWLHVIIAFPTSYKVVITLWIVYLWVSLLKTIFWSRNGHDGSTDVQQRAWRSNRRRQEGLRSICMHTKKRVSSFRGNKIGLKDVITLRRHVETKVRAKIRKRKVTTKINHHDKINGKRKTARKQKMFQRAQELRRRAEDYHKCKIPPSARKALCNWVRMAAAEHRHSSGLPYWPYLTAETLKNRMGHQPPPPTQQHSITDNSLSLKTPPECLLTPLPPSADDNLKTPPECVLTPLPPSADDNLKTPPECVLTPLPPSADDNLKTPPECLLTPLPPSADDNLKTPPECLLTPLPPSALPSAPPSADDNLKTRAECLLHPLPPSADDNLKTPSERQLTPLPPSAPPSADDNIKTPAERLRGPLPPSADDNLKTPSERQLTPLPPSAPPSADDNIKTPAERLRGPLPPSADDNLKTPSERQLTPLPPSAPPSADDNIKTPAERLRGPLPPSADDNLKTPSERQLTALPPSADDNIKTPAERLRGPLPPSADDNLKTPSERQLTPLPPSAPPSADDNIKTPAFHPQRMISRHLPSVSSLPFHPQLHPQQMIISRYLLSVCGFRFHHQPMIISRHLPSVSSLPFHPQLHPQQMIISRHLPSVCGGRFHPERMIISRHLPSVSSLPFHPQLHPQQMIISRHLPSVCGGRFHPQQMIISRHLPSVSSLPFHPQLHPQQMIISRHLPSVCGGRFHPQRMIISRHLPSVSSLPFHPQLHPQQMIISRHLPSVCGGRFHPQQMIISRHLPSVSSLPFHPQLHPQQMIISRHLPSVCGGRFHPQRMIISRHLPSVSSLPFHPQLHPQQMIISRHLPSVCGERLRGPLPPSADDNLKTPSERQLTPLPPSAPPSADDNIKTPAERLRGPLPPSADDNLKTPSERQLTPLPPSAPPSADDNIKTPAERLRGPLPPSADDNLKTPSERQLTPLPPSAPPSADDNIKTPAERLRGPLPPSADDNLKTPPLATQEAEAEKPRKPKRQRAAEMEPPPEPKRRRVGDVEPSRKPKRRRAADVEPSSPEPKRRRVGDVEPSRKPKRRRAADVEPSSPEPKRRRVGDVEPSRKPKRRRAADVEPSLPEPKRRRLS.

The helical transmembrane segment at 60-84 threads the bilayer; sequence WLHVIIAFPTSYKVVITLWIVYLWV. Disordered regions lie at residues 241-262, 290-575, and 868-1133; these read NRMG…NSLS, LTPL…IKTP, and ERLR…RRLS. The segment covering 252-262 has biased composition (polar residues); it reads QQHSITDNSLS. The span at 349–359 shows a compositional bias: pro residues; it reads PLPPSALPSAP. Composition is skewed to basic and acidic residues over residues 406–416, 448–458, 490–500, 528–538, 903–913, 945–955, and 987–997; these read DNIKTPAERLR.

The protein belongs to the NPIP family.

The protein resides in the membrane. The chain is Nuclear pore complex-interacting protein family member B5 (NPIPB5) from Homo sapiens (Human).